A 169-amino-acid chain; its full sequence is Peptide deformylase (169 aa).

Positions 91 and 133 each coordinate Fe cation. Residue Glu134 is part of the active site. His137 contributes to the Fe cation binding site.

Belongs to the polypeptide deformylase family. Requires Fe(2+) as cofactor.

It carries out the reaction N-terminal N-formyl-L-methionyl-[peptide] + H2O = N-terminal L-methionyl-[peptide] + formate. In terms of biological role, removes the formyl group from the N-terminal Met of newly synthesized proteins. Requires at least a dipeptide for an efficient rate of reaction. N-terminal L-methionine is a prerequisite for activity but the enzyme has broad specificity at other positions. In Salmonella arizonae (strain ATCC BAA-731 / CDC346-86 / RSK2980), this protein is Peptide deformylase.